A 520-amino-acid chain; its full sequence is MAALEELKKKLSPLFDAEKGFSSSSSLDPNDSYLLSDGGTVNLLSRSYGVYNFNELGLQKCTSSHVDESESSETTYQCASHEMRVFGAIGSGASSVVQRAIHIPNHRILALKKINIFEREKRQQLLTEIRTLCEAPCHEGLVDFHGAFYSPDSGQISIALEYMNGGSLADILKVTKKIPEPVLSSLFHKLLQGLSYLHGVRHLVHRDIKPANLLINLKGEPKITDFGISAGLENSMAMCATFVGTVTYMSPERIRNDSYSYPADIWSLGLALFECGTGEFPYIANEGPVNLMLQILDDPSPTPPKQEFSPEFCSFIDACLQKDPDARPTADQLLSHPFITKHEKERVDLATFVQSIFDPTQRLKDLADMLTIHYYSLFDGFDDLWHHAKSLYTETSVFSFSGKHNTGSTEIFSALSDIRNTLTGDLPSEKLVHVVEKLHCKPCGSGGVIIRAVGSFIVGNQFLICGDGVQAEGLPSFKDLGFDVASRRVGRFQEQFVVESGDLIGKYFLAKQELYITNLD.

Phosphoserine is present on serine 69. The Protein kinase domain occupies 83–339 (MRVFGAIGSG…ADQLLSHPFI (257 aa)). Residues 89-97 (IGSGASSVV) and lysine 112 contribute to the ATP site. Residue aspartate 207 is the Proton acceptor of the active site. Position 235 is a phosphoserine (serine 235). 2 positions are modified to phosphothreonine: threonine 241 and threonine 245. Residues 366–516 (LADMLTIHYY…YFLAKQELYI (151 aa)) form the NTF2 domain.

The protein belongs to the protein kinase superfamily. STE Ser/Thr protein kinase family. MAP kinase kinase subfamily. As to quaternary structure, interacts with MPK1, MPK2 and MPK7. Interacts with P.syringae type III effector HopF2. Interacts with MPK14. Binds to MAPKKK17 and MAPKKK18. Binds to MAPKKK20. Post-translationally, phosphorylation at Ser-235 and Thr-241 by MAP kinase kinase kinases positively regulates kinase activity. Phosphorylated by MAPKKK20. In terms of tissue distribution, mostly expressed in leaves, and, to a lower extent, in roots, seedlings, flower buds, flowers and siliques.

It localises to the nucleus. The protein localises to the cytoplasm. It catalyses the reaction L-seryl-[protein] + ATP = O-phospho-L-seryl-[protein] + ADP + H(+). It carries out the reaction L-threonyl-[protein] + ATP = O-phospho-L-threonyl-[protein] + ADP + H(+). The catalysed reaction is L-tyrosyl-[protein] + ATP = O-phospho-L-tyrosyl-[protein] + ADP + H(+). In terms of biological role, MKK3-MPK6 module plays an important role in the jasmonate signal transduction pathway through the negative regulation of MYC2/JIN1 expression. Activates by phosphorylation the downstream MPK6, MPK7 and MPK8. MKK3-MPK7 module acts as a positive regulator of PR1 gene expression. MKK3-MPK8 module negatively regulates ROS accumulation through controlling expression of the RBOHD gene. Component of the abscisic acid (ABA) signaling pathway that may act as ABA signal transducer in the context of abiotic stresses. Activator of the C group MAP kinases. Activates MPK7 in response to ABA. Mitogen-activated protein kinase (MAPK) that is specifically regulated by MAPKKK20 and mediates signaling that regulates cortical microtubule functions. The sequence is that of Mitogen-activated protein kinase kinase 3 from Arabidopsis thaliana (Mouse-ear cress).